A 144-amino-acid chain; its full sequence is ATP synthase subunit 9, mitochondrial (144 aa).

The transit peptide at 1 to 63 directs the protein to the mitochondrion; sequence MASTRVLASR…ATRQITQKRA (63 aa). Helical transmembrane passes span 83 to 103 and 120 to 140; these read TAAI…AALL and AILG…VALM.

This sequence belongs to the ATPase C chain family. As to quaternary structure, F-type ATPases have 2 components, CF(1) - the catalytic core - and CF(0) - the membrane proton channel. CF(1) has five subunits: alpha(3), beta(3), gamma(1), delta(1), epsilon(1). CF(0) has three main subunits: a, b and c.

It localises to the mitochondrion membrane. Functionally, mitochondrial membrane ATP synthase (F(1)F(0) ATP synthase or Complex V) produces ATP from ADP in the presence of a proton gradient across the membrane which is generated by electron transport complexes of the respiratory chain. F-type ATPases consist of two structural domains, F(1) - containing the extramembraneous catalytic core and F(0) - containing the membrane proton channel, linked together by a central stalk and a peripheral stalk. During catalysis, ATP synthesis in the catalytic domain of F(1) is coupled via a rotary mechanism of the central stalk subunits to proton translocation. Part of the complex F(0) domain. A homomeric c-ring of probably 10 subunits is part of the complex rotary element. This Podospora anserina (Pleurage anserina) protein is ATP synthase subunit 9, mitochondrial (ATP9).